A 261-amino-acid chain; its full sequence is uncharacterized protein (261 aa).

The segment covering 1–12 (MSRTSSQNQEII) has biased composition (polar residues). The interval 1–139 (MSRTSSQNQE…KELDTINKKT (139 aa)) is disordered. Over residues 23–55 (SSKPSKSSKPSKSSKPSKSSKTSKSSRSSGSKS) the composition is skewed to low complexity. Over residues 65–74 (SRKDKYKEEY) the composition is skewed to basic and acidic residues. Residues 79 to 108 (YPDEQEYEQEYEQEYEQEYQDNGEQTEEFV) show a composition bias toward acidic residues. Residues 122 to 139 (DERQTQSNKELDTINKKT) are compositionally biased toward basic and acidic residues. Coiled coils occupy residues 151-181 (MDHD…IIKL) and 218-243 (EDII…KKIE).

This is an uncharacterized protein from Acanthamoeba polyphaga (Amoeba).